We begin with the raw amino-acid sequence, 123 residues long: Small ribosomal subunit protein uS12 (123 aa).

3-methylthioaspartic acid is present on aspartate 89.

This sequence belongs to the universal ribosomal protein uS12 family. As to quaternary structure, part of the 30S ribosomal subunit. Contacts proteins S8 and S17. May interact with IF1 in the 30S initiation complex.

Functionally, with S4 and S5 plays an important role in translational accuracy. In terms of biological role, interacts with and stabilizes bases of the 16S rRNA that are involved in tRNA selection in the A site and with the mRNA backbone. Located at the interface of the 30S and 50S subunits, it traverses the body of the 30S subunit contacting proteins on the other side and probably holding the rRNA structure together. The combined cluster of proteins S8, S12 and S17 appears to hold together the shoulder and platform of the 30S subunit. This chain is Small ribosomal subunit protein uS12, found in Syntrophus aciditrophicus (strain SB).